The sequence spans 63 residues: UPF0434 protein Mmar10_2939 (63 aa).

Belongs to the UPF0434 family.

This Maricaulis maris (strain MCS10) (Caulobacter maris) protein is UPF0434 protein Mmar10_2939.